The sequence spans 953 residues: Pyruvate, phosphate dikinase, chloroplastic (953 aa).

The N-terminal 77 residues, 1 to 77 (MMSSLSVEGM…VLNPVSPPVT (77 aa)), are a transit peptide targeting the chloroplast. Residues 55-74 (PELRSSGLTPPRAVLNPVSP) are disordered. Position 533 is a phosphothreonine; by PDRP1 (threonine 533). Histidine 535 serves as the catalytic Tele-phosphohistidine intermediate. Residues arginine 641, arginine 698, glutamate 827, glycine 848, threonine 849, asparagine 850, and aspartate 851 each coordinate substrate. Glutamate 827 contributes to the Mg(2+) binding site. Aspartate 851 is a Mg(2+) binding site. The active-site Proton donor is cysteine 913.

The protein belongs to the PEP-utilizing enzyme family. Homotetramer. The cofactor is Mg(2+). Phosphorylation of Thr-533 in the dark inactivates the enzyme. Dephosphorylation upon light stimulation reactivates the enzyme.

The protein resides in the plastid. It is found in the chloroplast. It catalyses the reaction pyruvate + phosphate + ATP = phosphoenolpyruvate + AMP + diphosphate + H(+). It participates in photosynthesis; C4 acid pathway. With respect to regulation, activated by light-induced dephosphorylation. Inhibited by dark-induced phosphorylation. Both reactions are catalyzed by PDRP1. Inactivated by cold due to the dissociation of the homotetramer. Its function is as follows. Formation of phosphoenolpyruvate, which is the primary acceptor of CO(2) in C4 and some Crassulacean acid metabolism plants. This Flaveria bidentis (Coastal plain yellowtops) protein is Pyruvate, phosphate dikinase, chloroplastic.